Here is a 135-residue protein sequence, read N- to C-terminus: uncharacterized protein (135 aa).

It belongs to the MG067/MG068/MG395 family.

This is an uncharacterized protein from Mycoplasma pneumoniae (strain ATCC 29342 / M129 / Subtype 1) (Mycoplasmoides pneumoniae).